A 145-amino-acid chain; its full sequence is 3-dehydroquinate dehydratase (145 aa).

The active-site Proton acceptor is Tyr22. Substrate contacts are provided by Asn71, His77, and Asp84. The active-site Proton donor is His97. Residues 98–99 and Arg108 contribute to the substrate site; that span reads LS.

This sequence belongs to the type-II 3-dehydroquinase family. As to quaternary structure, homododecamer.

It carries out the reaction 3-dehydroquinate = 3-dehydroshikimate + H2O. It functions in the pathway metabolic intermediate biosynthesis; chorismate biosynthesis; chorismate from D-erythrose 4-phosphate and phosphoenolpyruvate: step 3/7. In terms of biological role, catalyzes a trans-dehydration via an enolate intermediate. This is 3-dehydroquinate dehydratase from Francisella tularensis subsp. mediasiatica (strain FSC147).